Consider the following 80-residue polypeptide: Raniseptin-8 (80 aa).

The N-terminal stretch at M1–C22 is a signal peptide. The propeptide occupies E23–E49. A disordered region spans residues R27–E46. Acidic residues predominate over residues E30–E44.

It belongs to the frog skin active peptide (FSAP) family. Dermaseptin subfamily. Expressed by the skin glands.

Its subcellular location is the secreted. Its function is as follows. Has antibacterial activity. The sequence is that of Raniseptin-8 from Boana raniceps (Chaco tree frog).